We begin with the raw amino-acid sequence, 207 residues long: Large ribosomal subunit protein uL4 (207 aa).

A disordered region spans residues Ala-50–Gly-76.

The protein belongs to the universal ribosomal protein uL4 family. In terms of assembly, part of the 50S ribosomal subunit.

In terms of biological role, one of the primary rRNA binding proteins, this protein initially binds near the 5'-end of the 23S rRNA. It is important during the early stages of 50S assembly. It makes multiple contacts with different domains of the 23S rRNA in the assembled 50S subunit and ribosome. Forms part of the polypeptide exit tunnel. The protein is Large ribosomal subunit protein uL4 of Staphylococcus aureus (strain JH9).